The sequence spans 330 residues: UPF0324 membrane protein PG_2004 (330 aa).

The next 9 membrane-spanning stretches (helical) occupy residues 13–31, 36–58, 71–93, 97–114, 126–148, 158–180, 248–270, 285–307, and 312–329; these read IAYP…GSLV, PFTS…LIFG, VLLQ…LASG, MMFT…GWFI, SALI…GPIL, ALGT…GHWL, VPLF…EAYF, LTLS…VGVR, and GLFL…FILL.

Belongs to the UPF0324 family.

Its subcellular location is the cell membrane. This Porphyromonas gingivalis (strain ATCC BAA-308 / W83) protein is UPF0324 membrane protein PG_2004.